Here is a 428-residue protein sequence, read N- to C-terminus: Inward rectifier potassium channel 2 (428 aa).

Topologically, residues 1–81 (MGSVRTNRYS…IFTTCVDIRW (81 aa)) are cytoplasmic. Residue cysteine 76 is modified to S-nitrosocysteine. The chain crosses the membrane as a helical span at residues 82-106 (RWMLVIFCLAFVLSWLFFGCVFWLI). Topologically, residues 107–128 (ALLHGDLDTSKVSKACVSEVNS) are extracellular. Positions 129 to 140 (FTAAFLFSIETQ) form an intramembrane region, helical; Pore-forming. An intramembrane region (pore-forming) is located at residues 141-147 (TTIGYGF). The Selectivity filter motif lies at 142–147 (TIGYGF). Topologically, residues 148–156 (RCVTDECPI) are extracellular. The chain crosses the membrane as a helical span at residues 157-178 (AVFMVVFQSIVGCIIDAFIIGA). Residues 179–428 (VMAKMAKPKK…PRPLRRESEI (250 aa)) lie on the Cytoplasmic side of the membrane. The tract at residues 181–208 (AKMAKPKKRNETLVFSHNAVIAMRDGKL) is polyphosphoinositide (PIP2)-binding. The disordered stretch occupies residues 383–428 (TSKEEEEDSENGVPESTSTDSPPGIDLHNQASVPLEPRPLRRESEI). Positions 426-428 (SEI) match the PDZ-binding motif.

Belongs to the inward rectifier-type potassium channel (TC 1.A.2.1) family. KCNJ2 subfamily. In terms of assembly, homotetramer. Homomultimeric and heteromultimeric association with KCNJ4/Kir2.3. Can form heteromeric channels with Kir2.6/KCNJ18. Associates, via its PDZ-recognition domain, with a complex containing LIN7A, LIN7B, LIN7C, DLG1, CASK and APBA1. S-nitrosylation increases the open probability and inward rectifying currents. In terms of tissue distribution, prominently expressed in the central nervous system. Also found in other excitable tissues such as heart and skeletal muscle.

It localises to the cell membrane. The protein localises to the sarcolemma. Its subcellular location is the T-tubule. It catalyses the reaction K(+)(in) = K(+)(out). With respect to regulation, activated by phosphatidylinositol 4,5 biphosphate (PtdIns(4,5)P2). In terms of biological role, inward rectifier potassium channels are characterized by a greater tendency to allow potassium to flow into the cell rather than out of it. Their voltage dependence is regulated by the concentration of extracellular potassium; as external potassium is raised, the voltage range of the channel opening shifts to more positive voltages. The inward rectification is mainly due to the blockage of outward current by internal magnesium. Can be blocked by extracellular barium and cesium. Probably participates in establishing action potential waveform and excitability of neuronal and muscle tissues. This is Inward rectifier potassium channel 2 (Kcnj2) from Mus musculus (Mouse).